Reading from the N-terminus, the 366-residue chain is 3-dehydroquinate synthase (366 aa).

NAD(+)-binding positions include 74–79 (SGEAAK), 108–112 (GVVGD), 132–133 (TT), lysine 144, lysine 153, and 171–174 (FLRT). Residues glutamate 186, histidine 249, and histidine 266 each coordinate Zn(2+).

This sequence belongs to the sugar phosphate cyclases superfamily. Dehydroquinate synthase family. Requires Co(2+) as cofactor. The cofactor is Zn(2+). NAD(+) is required as a cofactor.

The protein resides in the cytoplasm. It catalyses the reaction 7-phospho-2-dehydro-3-deoxy-D-arabino-heptonate = 3-dehydroquinate + phosphate. It participates in metabolic intermediate biosynthesis; chorismate biosynthesis; chorismate from D-erythrose 4-phosphate and phosphoenolpyruvate: step 2/7. Functionally, catalyzes the conversion of 3-deoxy-D-arabino-heptulosonate 7-phosphate (DAHP) to dehydroquinate (DHQ). This Geobacillus thermodenitrificans (strain NG80-2) protein is 3-dehydroquinate synthase.